Reading from the N-terminus, the 183-residue chain is Interleukin-24 (183 aa).

The N-terminal stretch at 1-28 is a signal peptide; that stretch reads MQTSLRQQILPGLSLILLVLNQVPELQG. The cysteines at positions 36 and 83 are disulfide-linked. An N-linked (GlcNAc...) asparagine glycan is attached at N76. K99 participates in a covalent cross-link: Glycyl lysine isopeptide (Lys-Gly) (interchain with G-Cter in ubiquitin).

It belongs to the IL-10 family. In terms of processing, glycosylated. Ubiquitination at Lys-99 promotes proteasomal degradation.

Its subcellular location is the secreted. Its function is as follows. Multifunctional cytokine mainly produced by T-cells that plays a regulatory role in immune response, tissue homeostasis, host defense, and oncogenesis. Possesses antiviral functions and induces the type I interferon response during influenza infection. Signals through two receptor complexes IL20RA/IL20RB or IL20RB/IL22RA1. In turn, stimulates the JAK1-STAT3 and MAPK pathways and promotes the secretion of pro-inflammatory mediators including IL8 and MMP1. Intracellularly, maintains endoplasmic reticulum homeostasis by restricting the eIF2alpha-CHOP pathway-mediated stress signal. In addition, acts as a quality control mechanism for the ubiquitin proteasome system by alerting the cell to proteasome dysfunction through activation of PKR/EIF2AK2. The sequence is that of Interleukin-24 (Il24) from Rattus norvegicus (Rat).